A 308-amino-acid polypeptide reads, in one-letter code: ADP-L-glycero-D-manno-heptose-6-epimerase (308 aa).

NADP(+) is bound by residues 10–11, 31–32, K38, K53, 75–79, and N92; these read MI, DN, and EGACS. Y140 serves as the catalytic Proton acceptor. K144 provides a ligand contact to NADP(+). Residue N169 participates in substrate binding. The NADP(+) site is built by V170 and K178. Catalysis depends on K178, which acts as the Proton acceptor. Substrate contacts are provided by residues S180, H187, 201–204, R209, and Y272; that span reads FEGS.

Belongs to the NAD(P)-dependent epimerase/dehydratase family. HldD subfamily. In terms of assembly, homopentamer. It depends on NADP(+) as a cofactor.

It catalyses the reaction ADP-D-glycero-beta-D-manno-heptose = ADP-L-glycero-beta-D-manno-heptose. It participates in nucleotide-sugar biosynthesis; ADP-L-glycero-beta-D-manno-heptose biosynthesis; ADP-L-glycero-beta-D-manno-heptose from D-glycero-beta-D-manno-heptose 7-phosphate: step 4/4. In terms of biological role, catalyzes the interconversion between ADP-D-glycero-beta-D-manno-heptose and ADP-L-glycero-beta-D-manno-heptose via an epimerization at carbon 6 of the heptose. The chain is ADP-L-glycero-D-manno-heptose-6-epimerase from Actinobacillus pleuropneumoniae serotype 7 (strain AP76).